We begin with the raw amino-acid sequence, 256 residues long: Histone H1 (256 aa).

Low complexity-rich tracts occupy residues 1–19 (MSDS…PPAT) and 27–43 (KKAS…ASAT). Disordered stretches follow at residues 1 to 53 (MSDS…QQMV) and 108 to 256 (GKGA…AAKK). Position 11 is a phosphoserine (S11). Positions 45–119 (SHPPTQQMVD…GASGSFKLSA (75 aa)) constitute an H15 domain. Basic and acidic residues-rich tracts occupy residues 121–140 (AKKE…EKKV) and 176–193 (KTAE…DAKK). Residues 194 to 229 (TGIIKSKPAATKAKVTAAKPKAVVAKASKAKPAVSA) show a composition bias toward low complexity. A compositionally biased stretch (basic residues) spans 245–256 (KKPKAKTTAAKK).

It belongs to the histone H1/H5 family. Post-translationally, phosphorylated in oocytes during prophase I of meiosis.

Its subcellular location is the nucleus. The protein resides in the chromosome. Histones H1 are necessary for the condensation of nucleosome chains into higher-order structures. The protein is Histone H1 (His1) of Drosophila melanogaster (Fruit fly).